Reading from the N-terminus, the 2067-residue chain is Non-reducing polyketide synthase PKS12 (2067 aa).

The tract at residues 4–241 is N-terminal acylcarrier protein transacylase (SAT) domain; it reads FVFGDQSTRF…LPVPIYAPYH (238 aa). Residues 350–373 are disordered; it reads NSMGPKASTSHSSAETQTESSSKN. Polar residues predominate over residues 356-373; it reads ASTSHSSAETQTESSSKN. The 436-residue stretch at 373-808 folds into the Ketosynthase family 3 (KS3) domain; the sequence is NSKIAIVAMS…GGNSAVLLQD (436 aa). Catalysis depends on for beta-ketoacyl synthase activity residues cysteine 545, histidine 680, and histidine 725. Residues 912 to 1199 are malonyl-CoA:ACP transacylase (MAT) domain; sequence FVFSGQGAQY…VVCSTFLKSS (288 aa). Serine 1001 functions as the For acyl/malonyl transferase activity in the catalytic mechanism. The interval 1297 to 1433 is N-terminal hotdog fold; the sequence is QKILQETSLD…CELRLEHPSQ (137 aa). The 310-residue stretch at 1297–1606 folds into the PKS/mFAS DH domain; that stretch reads QKILQETSLD…FQGLPRRVLN (310 aa). The Proton acceptor; for dehydratase activity role is filled by histidine 1329. The product template (PT) domain stretch occupies residues 1329-1604; it reads HRVNGVKVCT…ITFQGLPRRV (276 aa). The interval 1460 to 1606 is C-terminal hotdog fold; the sequence is LDSMLATGMV…FQGLPRRVLN (147 aa). Catalysis depends on aspartate 1519, which acts as the Proton donor; for dehydratase activity. Residues 1619–1648 are disordered; that stretch reads APMGRRDVPPSRMDVPPVRSGEGPPTSAPT. The 79-residue stretch at 1660–1738 folds into the Carrier domain; the sequence is TSMDSRLRPL…SFKLFLGLVD (79 aa). The residue at position 1698 (serine 1698) is an O-(pantetheine 4'-phosphoryl)serine. The tract at residues 1742–1779 is disordered; the sequence is KSSSGSDGSGRSSPAPGIESGATTPPMSEEDQDKIVSS. The segment covering 1743–1754 has biased composition (low complexity); it reads SSSGSDGSGRSS. The interval 1781–2065 is claisen cyclase domain; that stretch reads SLHQFQASST…YVSAFLARAL (285 aa). The For Claisen cyclase activity role is filled by serine 1875.

The enzyme catalyses 6 malonyl-CoA + acetyl-CoA + 6 H(+) = naphtopyrone YWA1 + 6 CO2 + 7 CoA + H2O. The protein operates within pigment biosynthesis. Functionally, non-reducing polyketide synthase; part of the gene cluster that mediates the biosynthesis of aurofusarin, a red mycelium pigment which is acting as a mycotoxin. The first step is performed by the polyketide synthase which condenses one acetyl-CoA and 6 malonyl-CoA units to form the first intermediate, the cyclic heptaketide and yellow pigment YWA1. The C2 hydroxyl group in the pyrone ring of YWA1 is probably formed during ring closure by an aldol-type cyclization reaction. The dehydratase aurZ then acts as the first tailoring enzyme in the aurofusarin biosynthetic pathway by converting YWA1 to nor-rubrofusarin. Nor-rubrofusarin is then methylated to rubrofusarin by the O-methyltransferase aurJ. Rubrofusarin is then transported across the plasma membrane by the rubrofusarin-specific pump aurT for further enzymatic processing by the extracellular complex composed of GIP1, aurF, aurO and aurS to yield aurofusarin. The protein is Non-reducing polyketide synthase PKS12 of Gibberella zeae (strain ATCC MYA-4620 / CBS 123657 / FGSC 9075 / NRRL 31084 / PH-1) (Wheat head blight fungus).